The sequence spans 97 residues: CRISPR-associated endoribonuclease Cas2 1 (97 aa).

Mg(2+) is bound at residue Asp12.

Belongs to the CRISPR-associated endoribonuclease Cas2 protein family. In terms of assembly, homodimer, forms a heterotetramer with a Cas1 homodimer. Mg(2+) serves as cofactor.

In terms of biological role, CRISPR (clustered regularly interspaced short palindromic repeat) is an adaptive immune system that provides protection against mobile genetic elements (viruses, transposable elements and conjugative plasmids). CRISPR clusters contain sequences complementary to antecedent mobile elements and target invading nucleic acids. CRISPR clusters are transcribed and processed into CRISPR RNA (crRNA). Functions as a ssRNA-specific endoribonuclease. Involved in the integration of spacer DNA into the CRISPR cassette. The chain is CRISPR-associated endoribonuclease Cas2 1 from Francisella tularensis subsp. novicida (strain U112).